Reading from the N-terminus, the 258-residue chain is Synapse differentiation-inducing gene protein 1 (258 aa).

The Cytoplasmic portion of the chain corresponds to 1-181 (MDGIIEQKSM…NFLMMPPRDH (181 aa)). A Phosphoserine modification is found at Ser137. A helical transmembrane segment spans residues 182-202 (LGLSVFSMLCCFWPLGIAAFY). The Extracellular segment spans residues 203–228 (LSHETNKAVAKGDLHQASTSSRRALF). Residues 229 to 249 (LAVLSITIGTGVYVGVAVALI) constitute an intramembrane region (helical). Residues 250–258 (AYLSKNNHL) lie on the Extracellular side of the membrane.

It belongs to the CD225/Dispanin family. In terms of assembly, homodimer. Interacts with GRIA1 and GRIA2.

Its subcellular location is the cell membrane. The protein resides in the early endosome membrane. It localises to the postsynaptic density membrane. It is found in the synapse. The protein localises to the cell projection. Its subcellular location is the dendrite. The protein resides in the dendritic spine. May regulate AMPA receptor content at nascent synapses, and have a role in postsynaptic development and maturation. This chain is Synapse differentiation-inducing gene protein 1 (SYNDIG1), found in Macaca fascicularis (Crab-eating macaque).